A 120-amino-acid polypeptide reads, in one-letter code: MLKMDREKLIVPNQIGYLILKEDGAVLESGGDLKNDERSANVIMGLLNLTETIDESFMPSSSCERITIDYEHHYYSICMSNRRIYIIKISKSQNGVTTTTSSSSSNSVYNDASDSGAVLA.

Residues 93 to 120 (QNGVTTTTSSSSSNSVYNDASDSGAVLA) form a disordered region. Residues 97–107 (TTTTSSSSSNS) are compositionally biased toward low complexity.

This sequence belongs to the LAMTOR4 family. As to quaternary structure, part of the Ragulator complex composed of Lamtor3, Lamtor2, CG14184, CG14812, and Lamtor4.

The protein resides in the lysosome. Regulator of the TOR pathway, a signaling cascade that promotes cell growth in response to growth factors, energy levels, and amino acids. As part of the Ragulator complex, may activate the TOR signaling cascade in response to amino acids. This Drosophila melanogaster (Fruit fly) protein is Ragulator complex protein LAMTOR4 homolog.